We begin with the raw amino-acid sequence, 426 residues long: Serine--tRNA ligase (426 aa).

The tract at residues 44 to 67 (TEKQALQSERNATSKQIGMLKKKG) is disordered. Positions 47–59 (QALQSERNATSKQ) are enriched in polar residues. 231-233 (TAE) is a binding site for L-serine. Residues 262–264 (RRE) and Val278 contribute to the ATP site. Position 285 (Glu285) interacts with L-serine. An ATP-binding site is contributed by 349–352 (EVSS). L-serine is bound at residue Ser384.

The protein belongs to the class-II aminoacyl-tRNA synthetase family. Type-1 seryl-tRNA synthetase subfamily. Homodimer. The tRNA molecule binds across the dimer.

It localises to the cytoplasm. The catalysed reaction is tRNA(Ser) + L-serine + ATP = L-seryl-tRNA(Ser) + AMP + diphosphate + H(+). It carries out the reaction tRNA(Sec) + L-serine + ATP = L-seryl-tRNA(Sec) + AMP + diphosphate + H(+). It functions in the pathway aminoacyl-tRNA biosynthesis; selenocysteinyl-tRNA(Sec) biosynthesis; L-seryl-tRNA(Sec) from L-serine and tRNA(Sec): step 1/1. In terms of biological role, catalyzes the attachment of serine to tRNA(Ser). Is also able to aminoacylate tRNA(Sec) with serine, to form the misacylated tRNA L-seryl-tRNA(Sec), which will be further converted into selenocysteinyl-tRNA(Sec). The chain is Serine--tRNA ligase from Akkermansia muciniphila (strain ATCC BAA-835 / DSM 22959 / JCM 33894 / BCRC 81048 / CCUG 64013 / CIP 107961 / Muc).